The chain runs to 150 residues: 3-dehydroquinate dehydratase (150 aa).

Tyr-26 (proton acceptor) is an active-site residue. Residues Asn-77, His-83, and Asp-90 each contribute to the substrate site. The Proton donor role is filled by His-103. Residues 104–105 (LS) and Arg-114 each bind substrate.

The protein belongs to the type-II 3-dehydroquinase family. In terms of assembly, homododecamer.

The catalysed reaction is 3-dehydroquinate = 3-dehydroshikimate + H2O. Its pathway is metabolic intermediate biosynthesis; chorismate biosynthesis; chorismate from D-erythrose 4-phosphate and phosphoenolpyruvate: step 3/7. Its function is as follows. Catalyzes a trans-dehydration via an enolate intermediate. In Pseudoalteromonas translucida (strain TAC 125), this protein is 3-dehydroquinate dehydratase.